A 196-amino-acid chain; its full sequence is DnaA initiator-associating protein DiaA (196 aa).

The 163-residue stretch at Leu34 to Asp196 folds into the SIS domain.

The protein belongs to the SIS family. DiaA subfamily. Homotetramer; dimer of dimers.

In terms of biological role, required for the timely initiation of chromosomal replication via direct interactions with the DnaA initiator protein. This chain is DnaA initiator-associating protein DiaA, found in Citrobacter koseri (strain ATCC BAA-895 / CDC 4225-83 / SGSC4696).